The primary structure comprises 1680 residues: Alpha-protein kinase 3 (1680 aa).

Positions Met-1–Arg-37 are disordered. Residues Arg-9–Gly-21 are compositionally biased toward gly residues. The region spanning Pro-77 to Thr-173 is the Ig-like 1 domain. Ser-229 is subject to Phosphoserine. Disordered regions lie at residues Ser-237–Asp-288, Glu-302–Glu-759, Ser-785–Ser-950, Glu-1078–Leu-1128, and Pro-1147–Ala-1244. Positions Lys-320–Glu-337 are enriched in basic and acidic residues. Residues Ser-339–Pro-353 show a composition bias toward polar residues. Over residues Ala-402–Val-426 the composition is skewed to pro residues. The segment covering Glu-514–Leu-532 has biased composition (low complexity). Polar residues-rich tracts occupy residues Ser-557–Lys-566 and Glu-731–Ser-744. The segment covering Ser-785 to Gly-796 has biased composition (basic and acidic residues). The segment covering Ser-917–Glu-932 has biased composition (polar residues). Basic and acidic residues-rich tracts occupy residues Glu-1087 to Thr-1111 and Ala-1151 to Ser-1165. Ser-1199 is subject to Phosphoserine. Basic and acidic residues predominate over residues Asp-1231 to Ala-1244. In terms of domain architecture, Ig-like 2 spans Pro-1251–Ser-1339. Cys-1273 and Cys-1323 are joined by a disulfide. An Alpha-type protein kinase domain is found at Lys-1367 to Leu-1600. Residues Pro-1603–Arg-1680 are disordered. 2 stretches are compositionally biased toward polar residues: residues Pro-1639–Thr-1660 and Asp-1671–Arg-1680.

It belongs to the protein kinase superfamily. Alpha-type protein kinase family. ALPK subfamily. In terms of tissue distribution, expressed in the heart and skeletal muscle of adult mice.

The protein localises to the nucleus. It carries out the reaction L-seryl-[protein] + ATP = O-phospho-L-seryl-[protein] + ADP + H(+). The catalysed reaction is L-threonyl-[protein] + ATP = O-phospho-L-threonyl-[protein] + ADP + H(+). In terms of biological role, involved in cardiomyocyte differentiation. The protein is Alpha-protein kinase 3 of Mus musculus (Mouse).